Here is a 700-residue protein sequence, read N- to C-terminus: mRNA cap guanine-N(7) methyltransferase (700 aa).

2 stretches are compositionally biased toward basic and acidic residues: residues 1–10 and 52–67; these read MVYDPIRDCD and EPPR…ESHR. Disordered regions lie at residues 1–263 and 277–392; these read MVYD…SVLR and AHAN…ERNK. The span at 113 to 128 shows a compositional bias: polar residues; it reads RSPSMSLSPRSQNQSL. Composition is skewed to low complexity over residues 129–144 and 220–241; these read PYPS…SAHP and PQPT…TPHH. In terms of domain architecture, mRNA cap 0 methyltransferase spans 429–700; the sequence is SPIIGLKKFN…LYMGFAFEKM (272 aa). Residue 438–439 participates in mRNA binding; it reads NN. K442, G461, D483, D512, Q538, and Y543 together coordinate S-adenosyl-L-methionine.

It belongs to the class I-like SAM-binding methyltransferase superfamily. mRNA cap 0 methyltransferase family.

It localises to the nucleus. The catalysed reaction is a 5'-end (5'-triphosphoguanosine)-ribonucleoside in mRNA + S-adenosyl-L-methionine = a 5'-end (N(7)-methyl 5'-triphosphoguanosine)-ribonucleoside in mRNA + S-adenosyl-L-homocysteine. Functionally, responsible for methylating the 5'-cap structure of mRNAs. The polypeptide is mRNA cap guanine-N(7) methyltransferase (ABD1) (Cryptococcus neoformans var. neoformans serotype D (strain B-3501A) (Filobasidiella neoformans)).